We begin with the raw amino-acid sequence, 581 residues long: Prolactin receptor (581 aa).

An N-terminal signal peptide occupies residues 1–24; that stretch reads MKENVASRAVFILLLFLNASLLNG. Residues 25–234 are Extracellular-facing; it reads QSPPGKPKII…QIPNDFPVND (210 aa). Fibronectin type-III domains lie at 27–127 and 129–229; these read PPGK…IVEP and PPAN…IPND. The cysteines at positions 36 and 46 are disulfide-linked. A glycan (N-linked (GlcNAc...) asparagine) is linked at Asn-59. Cys-75 and Cys-86 form a disulfide bridge. The N-linked (GlcNAc...) asparagine glycan is linked to Asn-132. Zn(2+) contacts are provided by Asp-211 and His-212. Positions 215–219 match the WSXWS motif motif; sequence WSEWS. N-linked (GlcNAc...) asparagine glycosylation is present at Asn-233. Residues 235–258 traverse the membrane as a helical segment; the sequence is TTVWIFVAVLSAVICLIMVWAVAL. The Cytoplasmic segment spans residues 259–581; the sequence is KGYSMMTCIL…PAKEAPPALP (323 aa). A Box 1 motif motif is present at residues 267 to 275; it reads ILPPVPGPK. Disordered stretches follow at residues 321–362 and 462–502; these read EDQQ…LFSE and LKPS…QDKT. A compositionally biased stretch (basic and acidic residues) spans 329–349; it reads PSKEHMEQGVKPMHMDPDSDS.

This sequence belongs to the type I cytokine receptor family. Type 1 subfamily. Interacts with SMARCA1. Interacts with NEK3 and VAV2 and this interaction is prolactin-dependent.

Its subcellular location is the membrane. Functionally, this is a receptor for the anterior pituitary hormone prolactin. The polypeptide is Prolactin receptor (PRLR) (Cervus elaphus (Red deer)).